The sequence spans 449 residues: Chromosomal replication initiator protein DnaA (449 aa).

Residues 1-72 (MPNLEELWAY…VEGVYEFAQL (72 aa)) form a domain I, interacts with DnaA modulators region. The segment at 72–109 (LEVDPVIMTKDELQPAPATDQRPAVEEDDQNLTFKAKT) is domain II. Residues 110-326 (HLNPKYTFDR…GALVRVQAFS (217 aa)) form a domain III, AAA+ region region. The ATP site is built by Gly154, Gly156, Lys157, and Thr158. The domain IV, binds dsDNA stretch occupies residues 327-449 (TMKNEDITTS…ELRNILKNRG (123 aa)).

This sequence belongs to the DnaA family. In terms of assembly, oligomerizes as a right-handed, spiral filament on DNA at oriC.

The protein localises to the cytoplasm. In terms of biological role, plays an essential role in the initiation and regulation of chromosomal replication. ATP-DnaA binds to the origin of replication (oriC) to initiate formation of the DNA replication initiation complex once per cell cycle. Binds the DnaA box (a 9 base pair repeat at the origin) and separates the double-stranded (ds)DNA. Forms a right-handed helical filament on oriC DNA; dsDNA binds to the exterior of the filament while single-stranded (ss)DNA is stabiized in the filament's interior. The ATP-DnaA-oriC complex binds and stabilizes one strand of the AT-rich DNA unwinding element (DUE), permitting loading of DNA polymerase. After initiation quickly degrades to an ADP-DnaA complex that is not apt for DNA replication. Binds acidic phospholipids. The protein is Chromosomal replication initiator protein DnaA of Lacticaseibacillus casei (strain BL23) (Lactobacillus casei).